The following is a 391-amino-acid chain: Phosphoglycerate kinase (391 aa).

Substrate contacts are provided by residues 21–23 (DLN), R36, 59–62 (HLGR), R113, and R146. ATP is bound by residues K197, E319, and 345-348 (GGDT).

The protein belongs to the phosphoglycerate kinase family. Monomer.

The protein localises to the cytoplasm. It carries out the reaction (2R)-3-phosphoglycerate + ATP = (2R)-3-phospho-glyceroyl phosphate + ADP. Its pathway is carbohydrate degradation; glycolysis; pyruvate from D-glyceraldehyde 3-phosphate: step 2/5. The chain is Phosphoglycerate kinase from Shewanella sp. (strain MR-7).